A 676-amino-acid chain; its full sequence is F420-dependent formate dehydrogenase 2 subunit alpha (676 aa).

The region spanning 4-60 (FKVVHTICPYCGTGCGIDLVVKDGKVVDSHPFKRHPVNEGKVCIKGNYCYEFVHSED) is the 4Fe-4S Mo/W bis-MGD-type domain. [4Fe-4S] cluster is bound by residues C11, C14, C18, and C46. A non-standard amino acid (selenocysteine) is located at residue U133.

This sequence belongs to the prokaryotic molybdopterin-containing oxidoreductase family. As to quaternary structure, dimer of an alpha (FdhA2) and a beta (FdhB2) subunit. [4Fe-4S] cluster serves as cofactor. It depends on Mo-bis(molybdopterin guanine dinucleotide) as a cofactor. Zn(2+) is required as a cofactor.

The enzyme catalyses oxidized coenzyme F420-(gamma-L-Glu)(n) + formate + 2 H(+) = reduced coenzyme F420-(gamma-L-Glu)(n) + CO2. Its function is as follows. Catalyzes the oxidation of formate to carbon dioxide, with coenzyme F420 as the electron acceptor. In vitro can also use methyl viologen as electron acceptor. The chain is F420-dependent formate dehydrogenase 2 subunit alpha from Methanococcus maripaludis (strain DSM 14266 / JCM 13030 / NBRC 101832 / S2 / LL).